The chain runs to 154 residues: uncharacterized protein (154 aa).

Helical transmembrane passes span 39–61 (LLIF…FFAR), 65–87 (LPYI…VSLL), 94–113 (VESL…RVFI), and 128–150 (LLIN…SPFT).

The protein localises to the cell membrane. This is an uncharacterized protein from Aquifex aeolicus (strain VF5).